The primary structure comprises 127 residues: MRHRKSGRKLNRNSSHRQAMFRNMAVSLLEHEAIKTTLPKAKELRRVAEPLITLAKEDSVANRRLAFDRTRSKEMVGKLFNELGPRYQERPGGYIRILKMGFRAGDNAPMAYVELVDRPELVDADEE.

This sequence belongs to the bacterial ribosomal protein bL17 family. In terms of assembly, part of the 50S ribosomal subunit. Contacts protein L32.

This chain is Large ribosomal subunit protein bL17, found in Alcanivorax borkumensis (strain ATCC 700651 / DSM 11573 / NCIMB 13689 / SK2).